A 637-amino-acid polypeptide reads, in one-letter code: Conglutin beta 5 (637 aa).

The first 30 residues, 1 to 30 (MAKMRVRFPMLVLLLGVVFLLAVSIGIAYG), serve as a signal peptide directing secretion. 3 stretches are compositionally biased toward basic and acidic residues: residues 33-105 (DVIK…REQE), 136-174 (RREE…REQE), and 184-203 (DYGR…REQE). 2 disordered regions span residues 33 to 221 (DVIK…YFSS) and 384 to 439 (EQED…LRSN). A Cupin type-1 1 domain is found at 217–375 (YYFSSERFQT…TFNTHYEEIQ (159 aa)). Basic and acidic residues predominate over residues 389 to 417 (EQRREQEQSHQDEGVIVRVSKEQIQELRK). In terms of domain architecture, Cupin type-1 2 spans 434 to 594 (FNLRSNEPIY…IFPGSAEDVE (161 aa)). A glycan (N-linked (GlcNAc...) asparagine) is linked at Asn-544. Residues 606–615 (ANAQPQQQQQ) show a composition bias toward low complexity. The segment at 606–626 (ANAQPQQQQQQREKEGRRGRR) is disordered.

It belongs to the 7S seed storage protein family. Component of globulins complexes which accumulate in seeds.

Seed storage protein. Accumulates during seed development and is hydrolyzed after germination to provide a carbon and nitrogen source for the developing seedling. This chain is Conglutin beta 5, found in Lupinus angustifolius (Narrow-leaved blue lupine).